The primary structure comprises 232 residues: Phosphatidylserine decarboxylase proenzyme (232 aa).

Ser-190 functions as the Schiff-base intermediate with substrate; via pyruvic acid in the catalytic mechanism. At Ser-190 the chain carries Pyruvic acid (Ser); by autocatalysis.

It belongs to the phosphatidylserine decarboxylase family. PSD-A subfamily. Heterodimer of a large membrane-associated beta subunit and a small pyruvoyl-containing alpha subunit. Requires pyruvate as cofactor. Post-translationally, is synthesized initially as an inactive proenzyme. Formation of the active enzyme involves a self-maturation process in which the active site pyruvoyl group is generated from an internal serine residue via an autocatalytic post-translational modification. Two non-identical subunits are generated from the proenzyme in this reaction, and the pyruvate is formed at the N-terminus of the alpha chain, which is derived from the carboxyl end of the proenzyme. The post-translation cleavage follows an unusual pathway, termed non-hydrolytic serinolysis, in which the side chain hydroxyl group of the serine supplies its oxygen atom to form the C-terminus of the beta chain, while the remainder of the serine residue undergoes an oxidative deamination to produce ammonia and the pyruvoyl prosthetic group on the alpha chain.

It localises to the cell membrane. The catalysed reaction is a 1,2-diacyl-sn-glycero-3-phospho-L-serine + H(+) = a 1,2-diacyl-sn-glycero-3-phosphoethanolamine + CO2. The protein operates within phospholipid metabolism; phosphatidylethanolamine biosynthesis; phosphatidylethanolamine from CDP-diacylglycerol: step 2/2. In terms of biological role, catalyzes the formation of phosphatidylethanolamine (PtdEtn) from phosphatidylserine (PtdSer). The protein is Phosphatidylserine decarboxylase proenzyme of Bradyrhizobium diazoefficiens (strain JCM 10833 / BCRC 13528 / IAM 13628 / NBRC 14792 / USDA 110).